Here is a 141-residue protein sequence, read N- to C-terminus: MLMPKRVKYRKQQRGTVRGMTKGASLVHFGDWGLKAMESSWITAQQIEACRLSMVRTLKRTGNIWINIFPDKPITSKGIGTRQGKGKGDVEGWVAVVKKGRVMFEIGGVDEATAKRALEYAASKLPIRTKIVQRYEIGGEL.

This sequence belongs to the universal ribosomal protein uL16 family. In terms of assembly, part of the 50S ribosomal subunit.

In terms of biological role, binds 23S rRNA and is also seen to make contacts with the A and possibly P site tRNAs. This chain is Large ribosomal subunit protein uL16, found in Petrotoga mobilis (strain DSM 10674 / SJ95).